We begin with the raw amino-acid sequence, 192 residues long: Peptidyl-tRNA hydrolase (192 aa).

Position 17 (His17) interacts with tRNA. The Proton acceptor role is filled by His22. Positions 68, 70, and 116 each coordinate tRNA.

This sequence belongs to the PTH family. As to quaternary structure, monomer.

The protein localises to the cytoplasm. The catalysed reaction is an N-acyl-L-alpha-aminoacyl-tRNA + H2O = an N-acyl-L-amino acid + a tRNA + H(+). Its function is as follows. Hydrolyzes ribosome-free peptidyl-tRNAs (with 1 or more amino acids incorporated), which drop off the ribosome during protein synthesis, or as a result of ribosome stalling. In terms of biological role, catalyzes the release of premature peptidyl moieties from peptidyl-tRNA molecules trapped in stalled 50S ribosomal subunits, and thus maintains levels of free tRNAs and 50S ribosomes. The protein is Peptidyl-tRNA hydrolase of Stenotrophomonas maltophilia (strain K279a).